The following is a 236-amino-acid chain: Small ribosomal subunit protein uS2c (236 aa).

Belongs to the universal ribosomal protein uS2 family.

The protein resides in the plastid. Its subcellular location is the chloroplast. The chain is Small ribosomal subunit protein uS2c (rps2) from Daucus carota (Wild carrot).